The chain runs to 78 residues: Large ribosomal subunit protein bL28 (78 aa).

The segment at 1–25 (MSRVCQVTGKRPTVGNNRSHARNAT) is disordered.

Belongs to the bacterial ribosomal protein bL28 family.

In Alteromonas mediterranea (strain DSM 17117 / CIP 110805 / LMG 28347 / Deep ecotype), this protein is Large ribosomal subunit protein bL28.